A 51-amino-acid polypeptide reads, in one-letter code: Large ribosomal subunit protein eL39 (51 aa).

The protein belongs to the eukaryotic ribosomal protein eL39 family.

The sequence is that of Large ribosomal subunit protein eL39 (rpl39e) from Methanocaldococcus jannaschii (strain ATCC 43067 / DSM 2661 / JAL-1 / JCM 10045 / NBRC 100440) (Methanococcus jannaschii).